The sequence spans 1036 residues: Isoleucine--tRNA ligase (1036 aa).

Residues 46–56 (PFATGLPHYGH) carry the 'HIGH' region motif. Residues 589–593 (KMSKR) carry the 'KMSKS' region motif. Lys-592 serves as a coordination point for ATP.

Belongs to the class-I aminoacyl-tRNA synthetase family. IleS type 2 subfamily. In terms of assembly, monomer. Zn(2+) serves as cofactor.

It localises to the cytoplasm. It catalyses the reaction tRNA(Ile) + L-isoleucine + ATP = L-isoleucyl-tRNA(Ile) + AMP + diphosphate. Functionally, catalyzes the attachment of isoleucine to tRNA(Ile). As IleRS can inadvertently accommodate and process structurally similar amino acids such as valine, to avoid such errors it has two additional distinct tRNA(Ile)-dependent editing activities. One activity is designated as 'pretransfer' editing and involves the hydrolysis of activated Val-AMP. The other activity is designated 'posttransfer' editing and involves deacylation of mischarged Val-tRNA(Ile). The sequence is that of Isoleucine--tRNA ligase from Chlamydia trachomatis serovar L2 (strain ATCC VR-902B / DSM 19102 / 434/Bu).